We begin with the raw amino-acid sequence, 61 residues long: Small ribosomal subunit protein uS14 (61 aa).

Positions 24, 27, 40, and 43 each coordinate Zn(2+).

Belongs to the universal ribosomal protein uS14 family. Zinc-binding uS14 subfamily. As to quaternary structure, part of the 30S ribosomal subunit. Contacts proteins S3 and S10. Zn(2+) serves as cofactor.

Binds 16S rRNA, required for the assembly of 30S particles and may also be responsible for determining the conformation of the 16S rRNA at the A site. The polypeptide is Small ribosomal subunit protein uS14 (Staphylococcus carnosus (strain TM300)).